The primary structure comprises 94 residues: Co-chaperonin GroES (94 aa).

This sequence belongs to the GroES chaperonin family. As to quaternary structure, heptamer of 7 subunits arranged in a ring. Interacts with the chaperonin GroEL.

The protein resides in the cytoplasm. In terms of biological role, together with the chaperonin GroEL, plays an essential role in assisting protein folding. The GroEL-GroES system forms a nano-cage that allows encapsulation of the non-native substrate proteins and provides a physical environment optimized to promote and accelerate protein folding. GroES binds to the apical surface of the GroEL ring, thereby capping the opening of the GroEL channel. The protein is Co-chaperonin GroES of Ehrlichia ruminantium (strain Gardel).